Reading from the N-terminus, the 319-residue chain is 7,8-didemethyl-8-hydroxy-5-deazariboflavin synthase (319 aa).

The 231-residue stretch at 6-236 folds into the Radical SAM core domain; sequence VTYSPAFTLV…AEITIQIPPN (231 aa). 3 residues coordinate [4Fe-4S] cluster: Cys20, Cys24, and Cys27.

It belongs to the radical SAM superfamily. CofG family. As to quaternary structure, consists of two subunits, CofG and CofH. It depends on [4Fe-4S] cluster as a cofactor.

It carries out the reaction 5-amino-5-(4-hydroxybenzyl)-6-(D-ribitylimino)-5,6-dihydrouracil + S-adenosyl-L-methionine = 7,8-didemethyl-8-hydroxy-5-deazariboflavin + 5'-deoxyadenosine + L-methionine + NH4(+) + H(+). The protein operates within cofactor biosynthesis; coenzyme F0 biosynthesis. Catalyzes the radical-mediated synthesis of 7,8-didemethyl-8-hydroxy-5-deazariboflavin from 5-amino-5-(4-hydroxybenzyl)-6-(D-ribitylimino)-5,6-dihydrouracil. The protein is 7,8-didemethyl-8-hydroxy-5-deazariboflavin synthase of Gloeobacter violaceus (strain ATCC 29082 / PCC 7421).